The chain runs to 339 residues: DNA-directed RNA polymerase subunit alpha (339 aa).

Residues 1-233 (MVREEIAVAT…DLFIPFLHAE (233 aa)) form an alpha N-terminal domain (alpha-NTD) region. The interval 267 to 339 (KKMALKSIFI…FGFDLPKNGK (73 aa)) is alpha C-terminal domain (alpha-CTD).

Belongs to the RNA polymerase alpha chain family. As to quaternary structure, in plastids the minimal PEP RNA polymerase catalytic core is composed of four subunits: alpha, beta, beta', and beta''. When a (nuclear-encoded) sigma factor is associated with the core the holoenzyme is formed, which can initiate transcription.

It is found in the plastid. The protein localises to the chloroplast. It carries out the reaction RNA(n) + a ribonucleoside 5'-triphosphate = RNA(n+1) + diphosphate. Functionally, DNA-dependent RNA polymerase catalyzes the transcription of DNA into RNA using the four ribonucleoside triphosphates as substrates. The chain is DNA-directed RNA polymerase subunit alpha from Piper cenocladum (Ant piper).